The chain runs to 375 residues: Methylthioribose-1-phosphate isomerase (375 aa).

Residues 53–55, R90, and Q202 each bind substrate; that span reads RGA. D243 functions as the Proton donor in the catalytic mechanism. 253–254 contacts substrate; that stretch reads NK.

This sequence belongs to the eIF-2B alpha/beta/delta subunits family. MtnA subfamily.

It carries out the reaction 5-(methylsulfanyl)-alpha-D-ribose 1-phosphate = 5-(methylsulfanyl)-D-ribulose 1-phosphate. Its pathway is amino-acid biosynthesis; L-methionine biosynthesis via salvage pathway; L-methionine from S-methyl-5-thio-alpha-D-ribose 1-phosphate: step 1/6. In terms of biological role, catalyzes the interconversion of methylthioribose-1-phosphate (MTR-1-P) into methylthioribulose-1-phosphate (MTRu-1-P). This Rhodospirillum centenum (strain ATCC 51521 / SW) protein is Methylthioribose-1-phosphate isomerase.